The primary structure comprises 64 residues: Large ribosomal subunit protein bL35c (64 aa).

This sequence belongs to the bacterial ribosomal protein bL35 family.

It localises to the plastid. The protein localises to the chloroplast. The chain is Large ribosomal subunit protein bL35c from Cyanidium caldarium (Red alga).